The sequence spans 134 residues: Small ribosomal subunit protein uS8 (134 aa).

It belongs to the universal ribosomal protein uS8 family. In terms of assembly, part of the 30S ribosomal subunit. Contacts proteins S5 and S12.

Its function is as follows. One of the primary rRNA binding proteins, it binds directly to 16S rRNA central domain where it helps coordinate assembly of the platform of the 30S subunit. The chain is Small ribosomal subunit protein uS8 from Nitratiruptor sp. (strain SB155-2).